A 392-amino-acid chain; its full sequence is Protein FAM53C (392 aa).

Residue M1 is modified to N-acetylmethionine. The interval 76 to 120 (LHLRPPSPGSSPQEQSLSQVLSPEPPDPEKLPVPPAPPSKRHCRS) is disordered. Over residues 85–97 (SSPQEQSLSQVLS) the composition is skewed to low complexity. Residues S122 and S162 each carry the phosphoserine modification. Disordered stretches follow at residues 141–167 (LWTPIKHRGSGGGGGPQVPHQSPPKRV) and 201–294 (DSSH…EDPR). Residues 201–215 (DSSHPSAASPQSGSW) show a composition bias toward polar residues. S232, S234, S255, and S273 each carry phosphoserine. Over residues 241–256 (ASRFLPSARSSPASSP) the composition is skewed to low complexity. The segment covering 278–294 (LDARKAGVKRRHEEDPR) has biased composition (basic and acidic residues). S299 bears the Phosphoserine mark.

Belongs to the FAM53 family.

This is Protein FAM53C from Bos taurus (Bovine).